The sequence spans 269 residues: Ribosomal RNA small subunit methyltransferase J (269 aa).

S-adenosyl-L-methionine-binding positions include 124-125 and aspartate 188; that span reads ER.

This sequence belongs to the methyltransferase superfamily. RsmJ family.

It is found in the cytoplasm. The catalysed reaction is guanosine(1516) in 16S rRNA + S-adenosyl-L-methionine = N(2)-methylguanosine(1516) in 16S rRNA + S-adenosyl-L-homocysteine + H(+). Its function is as follows. Specifically methylates the guanosine in position 1516 of 16S rRNA. The protein is Ribosomal RNA small subunit methyltransferase J of Saccharophagus degradans (strain 2-40 / ATCC 43961 / DSM 17024).